Consider the following 356-residue polypeptide: Methionine import ATP-binding protein MetN (356 aa).

The ABC transporter domain occupies Ile-7–Ile-250. Residue Gly-43–Ser-50 coordinates ATP.

The protein belongs to the ABC transporter superfamily. Methionine importer (TC 3.A.1.24) family. The complex is composed of two ATP-binding proteins (MetN), two transmembrane proteins (MetI) and a solute-binding protein (MetQ).

It is found in the cell membrane. The catalysed reaction is L-methionine(out) + ATP + H2O = L-methionine(in) + ADP + phosphate + H(+). It catalyses the reaction D-methionine(out) + ATP + H2O = D-methionine(in) + ADP + phosphate + H(+). Functionally, part of the ABC transporter complex MetNIQ involved in methionine import. Responsible for energy coupling to the transport system. In Streptococcus agalactiae serotype Ia (strain ATCC 27591 / A909 / CDC SS700), this protein is Methionine import ATP-binding protein MetN.